Consider the following 201-residue polypeptide: Translation initiation factor IF-3 (201 aa).

Belongs to the IF-3 family. Monomer.

It is found in the cytoplasm. Functionally, IF-3 binds to the 30S ribosomal subunit and shifts the equilibrium between 70S ribosomes and their 50S and 30S subunits in favor of the free subunits, thus enhancing the availability of 30S subunits on which protein synthesis initiation begins. This is Translation initiation factor IF-3 from Mycoplasma pneumoniae (strain ATCC 29342 / M129 / Subtype 1) (Mycoplasmoides pneumoniae).